A 132-amino-acid chain; its full sequence is MAKDPLAEAGLHFDELNKLRVLEPDVSQKTTELKEECEEFVDKIGQFQKIVGGLIELVDELAKEAETEKMKAIGARNLLKSVEKQREAQHQQLQALIAEKKMQLERYRIEYEALQKVEAEQSEFIDQFILQK.

Positions 74-123 (GARNLLKSVEKQREAQHQQLQALIAEKKMQLERYRIEYEALQKVEAEQSE) form a coiled coil.

The protein resides in the golgi apparatus. It localises to the cis-Golgi network. It is found in the cytoplasm. Its subcellular location is the cytoskeleton. The protein localises to the microtubule organizing center. The protein resides in the centrosome. It localises to the centriole. It is found in the cell projection. Its subcellular location is the cilium. The protein localises to the cytoplasmic vesicle. The protein resides in the secretory vesicle. It localises to the acrosome. Functionally, involved in ciliary process assembly. May play a role in the trafficking of ciliary membrane proteins from the Golgi complex to the cilium. Regulates the platelet-derived growth factor receptor-alpha (PDGFRA) signaling pathway. Plays an important role in spermatogenesis, particularly spermiogenesis, when germ cells form flagella. This chain is Intraflagellar transport protein 20 homolog (ift20), found in Danio rerio (Zebrafish).